The following is a 343-amino-acid chain: Fructose-1,6-bisphosphatase class 1 (343 aa).

Mg(2+) is bound by residues Glu90, Asp109, Leu111, and Asp112. Substrate contacts are provided by residues 112–115 (DGSS) and Asn199. Mg(2+) is bound at residue Glu271.

The protein belongs to the FBPase class 1 family. As to quaternary structure, homotetramer. Mg(2+) serves as cofactor.

The protein localises to the cytoplasm. The catalysed reaction is beta-D-fructose 1,6-bisphosphate + H2O = beta-D-fructose 6-phosphate + phosphate. Its pathway is carbohydrate biosynthesis; Calvin cycle. The chain is Fructose-1,6-bisphosphatase class 1 from Rhodopseudomonas palustris (strain ATCC BAA-98 / CGA009).